A 460-amino-acid chain; its full sequence is ESX-1 secretion-associated protein EspB (460 aa).

3 disordered regions span residues 92–116, 303–335, and 405–441; these read LDND…SAEL, PSDG…PADT, and LGGG…TEDR.

In terms of processing, cleaved in the C-terminal region by MycP1.

The protein resides in the secreted. The sequence is that of ESX-1 secretion-associated protein EspB from Mycobacterium tuberculosis (strain CDC 1551 / Oshkosh).